A 488-amino-acid polypeptide reads, in one-letter code: Probable glycine dehydrogenase (decarboxylating) subunit 2 (488 aa).

At Lys-274 the chain carries N6-(pyridoxal phosphate)lysine.

It belongs to the GcvP family. C-terminal subunit subfamily. In terms of assembly, the glycine cleavage system is composed of four proteins: P, T, L and H. In this organism, the P 'protein' is a heterodimer of two subunits. The cofactor is pyridoxal 5'-phosphate.

The catalysed reaction is N(6)-[(R)-lipoyl]-L-lysyl-[glycine-cleavage complex H protein] + glycine + H(+) = N(6)-[(R)-S(8)-aminomethyldihydrolipoyl]-L-lysyl-[glycine-cleavage complex H protein] + CO2. Functionally, the glycine cleavage system catalyzes the degradation of glycine. The P protein binds the alpha-amino group of glycine through its pyridoxal phosphate cofactor; CO(2) is released and the remaining methylamine moiety is then transferred to the lipoamide cofactor of the H protein. The chain is Probable glycine dehydrogenase (decarboxylating) subunit 2 from Listeria welshimeri serovar 6b (strain ATCC 35897 / DSM 20650 / CCUG 15529 / CIP 8149 / NCTC 11857 / SLCC 5334 / V8).